The primary structure comprises 149 residues: MSFLLPKLTSKKEVDQAIKSTAEKVLVLRFGRDEDPVCLQLDDILSKTSSDLSKMAAIYLVDVDQTAVYTQYFDISYIPSTVFFFNGQHMKVDYGSPDHTKFVGSFKTKQDFIDLIEVIYRGAMRGKLIVQSPIDPKNIPKYDLLYQDI.

Belongs to the DIM1 family. In terms of assembly, homodimer. Interacts with the U5-102 kDa protein subunit of the spliceosome.

It localises to the nucleus. Essential role in pre-mRNA splicing. Required in cell cycle progression for S/G(2) transition. This Homo sapiens (Human) protein is Thioredoxin-like protein 4B (TXNL4B).